The chain runs to 108 residues: Nucleoid-associated protein IL1848 (108 aa).

Disordered stretches follow at residues Met-1–Glu-26 and Lys-88–Phe-108. The span at Met-9–Glu-26 shows a compositional bias: low complexity.

Belongs to the YbaB/EbfC family. In terms of assembly, homodimer.

The protein resides in the cytoplasm. It localises to the nucleoid. In terms of biological role, binds to DNA and alters its conformation. May be involved in regulation of gene expression, nucleoid organization and DNA protection. This is Nucleoid-associated protein IL1848 from Idiomarina loihiensis (strain ATCC BAA-735 / DSM 15497 / L2-TR).